A 686-amino-acid chain; its full sequence is DNA gyrase subunit B (686 aa).

The span at 1–27 shows a compositional bias: polar residues; that stretch reads MADSGNPNENNPSTDTGVNDAVSTSHG. Residues 1 to 29 are disordered; sequence MADSGNPNENNPSTDTGVNDAVSTSHGDA. A Toprim domain is found at 465–579; it reads CEIFIVEGDS…SGHVYLSRPP (115 aa). Glu-471, Asp-544, and Asp-546 together coordinate Mg(2+).

Belongs to the type II topoisomerase GyrB family. As to quaternary structure, heterotetramer, composed of two GyrA and two GyrB chains. In the heterotetramer, GyrA contains the active site tyrosine that forms a transient covalent intermediate with DNA, while GyrB binds cofactors and catalyzes ATP hydrolysis. Requires Mg(2+) as cofactor. Mn(2+) is required as a cofactor. It depends on Ca(2+) as a cofactor.

The protein resides in the cytoplasm. The catalysed reaction is ATP-dependent breakage, passage and rejoining of double-stranded DNA.. A type II topoisomerase that negatively supercoils closed circular double-stranded (ds) DNA in an ATP-dependent manner to modulate DNA topology and maintain chromosomes in an underwound state. Negative supercoiling favors strand separation, and DNA replication, transcription, recombination and repair, all of which involve strand separation. Also able to catalyze the interconversion of other topological isomers of dsDNA rings, including catenanes and knotted rings. Type II topoisomerases break and join 2 DNA strands simultaneously in an ATP-dependent manner. In Streptomyces coelicolor (strain ATCC BAA-471 / A3(2) / M145), this protein is DNA gyrase subunit B.